The following is a 384-amino-acid chain: Aryl-hydrocarbon-interacting protein-like 1 (384 aa).

The PPIase FKBP-type domain maps to 53–145 (RQVGQPMHII…DLDELQKEPQ (93 aa)). 3 TPR repeats span residues 178–211 (VPVL…LRNL), 230–263 (NTLI…HPGI), and 264–297 (VKAY…EPSM). Residues 328–384 (SQGATQPPAEPPTEPPAQSSTEPPAEPPPAPSAELSAGPPAETATEPPPSPGHSLQH) are disordered. Residues 359 to 372 (SAELSAGPPAETAT) show a composition bias toward low complexity.

In terms of assembly, interacts with NUB1.

It localises to the cytoplasm. It is found in the nucleus. May be important in protein trafficking and/or protein folding and stabilization. In Pan paniscus (Pygmy chimpanzee), this protein is Aryl-hydrocarbon-interacting protein-like 1 (AIPL1).